Consider the following 747-residue polypeptide: Flowering time control protein FCA (747 aa).

Positions 80–101 (YSVRPTTPPVQQPLSGQKRGYP) are disordered. RRM domains lie at 120 to 201 (VKLF…YADG) and 211 to 291 (FKLF…FAEP). The span at 291 to 301 (PKRPKPGESRE) shows a compositional bias: basic and acidic residues. The tract at residues 291–503 (PKRPKPGESR…QQPLQKMQHP (213 aa)) is disordered. Composition is skewed to polar residues over residues 320 to 353 (RPTS…SNTG) and 395 to 406 (SSSATLQQQNRA). A compositionally biased stretch (low complexity) spans 448 to 460 (SSQLPTSQLPPQQ). Polar residues predominate over residues 461–498 (NISRATAPQTPLNINLRPTTVSSATVQFPPRSQQQPLQ). The 34-residue stretch at 591–624 (GSVKCTWTEHTSPDGFKYYYNGLTGESKWEKPEE) folds into the WW domain. A compositionally biased stretch (basic and acidic residues) spans 630–641 (REQQKQQQHQEK). Disordered regions lie at residues 630–707 (REQQ…SGIG) and 722–747 (AASM…KNKA). Over residues 642 to 673 (PTIQQSQTQLQPLQQQPQQVQQQYQGQQLQQP) the composition is skewed to low complexity. 2 stretches are compositionally biased toward polar residues: residues 674–707 (FYSS…SGIG) and 726–739 (NDIS…QSPQ).

Interacts (via C-terminus) with SWI3B and (via WW domain) with FY (via PPLPP motifs). As to expression, constitutively expressed, but the negative feedback maintains the active isoform a low level throughout much of the plant, except in meristematic cells at a specific time in development.

The protein resides in the nucleus. Plays a major role in the promotion of the transition of the vegetative meristem to reproductive development. Plays a role in the regulation of flowering time in the autonomous flowering pathway by decreasing FLOWERING LOCUS C mRNA levels. Required for RNA-mediated chromatin silencing of a range of loci in the genome. Cotranscriptionally recognizes aberrant RNA and marks it for silencing. Controls alternative cleavage and polyadenylation on pre-mRNAs and antisense RNAs. Acts redundantly with FPA to prevent the expression of distally polyadenylated antisense RNAs at the FLC locus. The chain is Flowering time control protein FCA (FCA) from Arabidopsis thaliana (Mouse-ear cress).